The sequence spans 255 residues: Short chain dehydrogenase adrF (255 aa).

NADP(+)-binding residues include Ile-11, Arg-118, Tyr-150, Lys-154, and Val-183. The Proton acceptor role is filled by Tyr-150. Residue Lys-154 is the Lowers pKa of active site Tyr of the active site.

The protein belongs to the short-chain dehydrogenases/reductases (SDR) family.

It functions in the pathway secondary metabolite biosynthesis; terpenoid biosynthesis. Short chain dehydrogenase; part of the gene cluster that mediates the biosynthesis of andrastins, meroterpenoid compounds that exhibit inhibitory activity against ras farnesyltransferase, suggesting that they could be promising leads for antitumor agents. The first step of the pathway is the synthesis of 3,5-dimethylorsellinic acid (DMOA) by the polyketide synthase adrD via condensation of one acetyl-CoA starter unit with 3 malonyl-CoA units and 2 methylations. DMAO is then converted to farnesyl-DMAO by the prenyltransferase adrG. The methyltransferase adrK catalyzes the methylation of the carboxyl group of farnesyl-DMAO to farnesyl-DMAO methyl ester which is further converted to epoxyfarnesyl-DMAO methyl ester by the FAD-dependent monooxygenase adrH. The terpene cyclase adrI then catalyzes the carbon skeletal rearrangement to generate the andrastin E, the first compound in the pathway having the andrastin scaffold, with the tetracyclic ring system. The post-cyclization tailoring enzymes adrF, adrE, adrJ, and adrA, are involved in the conversion of andrastin E into andrastin A. The short chain dehydrogenase adrF is responsible for the oxidation of the C-3 a hydroxyl group of andrastin E to yield the corresponding ketone, andrastin D. The ketoreductase adrE stereoselectively reduces the carbonyl moiety to reverse the stereochemistry of the C-3 position to yield andrastin F. The acetyltransferase adrJ is the acetyltransferase that attaches the acetyl group to the C-3 hydroxyl group of andrastin F to yield andrastin C. Finally, the cytochrome P450 monooxygenase adrA catalyzes two sequential oxidation reactions of the C-23 methyl group, to generate the corresponding alcohol andrastin B, and aldehyde andrastin A. This chain is Short chain dehydrogenase adrF, found in Penicillium rubens (strain ATCC 28089 / DSM 1075 / NRRL 1951 / Wisconsin 54-1255) (Penicillium chrysogenum).